Consider the following 451-residue polypeptide: Proline--tRNA ligase (451 aa).

The protein belongs to the class-II aminoacyl-tRNA synthetase family. ProS type 2 subfamily. In terms of assembly, homodimer.

It is found in the cytoplasm. The catalysed reaction is tRNA(Pro) + L-proline + ATP = L-prolyl-tRNA(Pro) + AMP + diphosphate. Functionally, catalyzes the attachment of proline to tRNA(Pro) in a two-step reaction: proline is first activated by ATP to form Pro-AMP and then transferred to the acceptor end of tRNA(Pro). The protein is Proline--tRNA ligase of Roseobacter denitrificans (strain ATCC 33942 / OCh 114) (Erythrobacter sp. (strain OCh 114)).